We begin with the raw amino-acid sequence, 666 residues long: MAQGAVIHVAPEEPTHAVCVVGTATPLDIRGSAPRGSTSFSITASPEVVVDVIHGPPSKKSTTGASKWPLDPKLEVTLQMKAASSRIDDQKVRISYYGPKTSSTQALLYLTGVELSLSADVTRTGKAKPAPAGKDQSTWTWGPDGHGAILLVNCDKEDPKSSGMDFEDDKVLDNKDLQDMSPMTLSTKTPKDFFDKYQLVLQVPKAKMNKVRVFRATRGKLPSRYKVVLGPQQFSHRLELLGGQHSTDFYVEGLAFPDADFKGLIPLTISLLDKSNPELPEALVFQDTVMFRVAPWIMTPNTQPPQEVYVCRFSDNEDFLKSLATFTKKAKCKLTVCPEEENQDDQWMQDEMEIGYIQAPHKTLPVVFDSPRDRGLKDFPVKRVMGPNFGYVTRGLYRAEVTGLDAFGNLEVSPPVTVRGKEYPLGRILIGSSGYSSSESRDMHQILQDFLGAQQVQAPVRLFSDWLFVGHVDEFLSFVPARGKQGFRLLLSSPRACYQMFQELQTEGHGEASLFEGLKRKRQTISDILSSQKLRDQNAYVESCIDWNREVLKRELGLTEGDIIDIPQLFRIVGNSRGNPKAEAFFPNMVNMLVLGKHLGIPKPFGPIINGRCCLEEKVCSLLEPLGLHCTFINDFYSYHMYHGEVHCGTNVRRKPFAFKWWHMVP.

Ca(2+) is bound by residues N153, D155, D165, D168, D176, and D179. A citrulline mark is found at R212 and R218. Q349 is a Ca(2+) binding site. Residue D350 is part of the active site. The Ca(2+) site is built by E351, E353, D369, and S370. Citrulline is present on residues R372, R374, and R383. R374 serves as a coordination point for substrate. The Ca(2+) site is built by F407, L410, and E411. Catalysis depends on residues H471, D473, and C648.

It belongs to the protein arginine deiminase family. Ca(2+) is required as a cofactor. Post-translationally, autocitrullination at Arg-372 and Arg-374 inactivates the enzyme. As to expression, epidermis.

It is found in the cytoplasm. It localises to the nucleus. The protein resides in the cytoplasmic granule. It catalyses the reaction L-arginyl-[protein] + H2O = L-citrullyl-[protein] + NH4(+). Its function is as follows. Catalyzes the citrullination/deimination of arginine residues of proteins such as histones, thereby playing a key role in histone code and regulation of stem cell maintenance. Citrullinates histone H1 at 'Arg-54' (to form H1R54ci), histone H3 at 'Arg-2', 'Arg-8', 'Arg-17' and/or 'Arg-26' (to form H3R2ci, H3R8ci, H3R17ci, H3R26ci, respectively) and histone H4 at 'Arg-3' (to form H4R3ci). Acts as a key regulator of stem cell maintenance by mediating citrullination of histone H1: citrullination of 'Arg-54' of histone H1 (H1R54ci) results in H1 displacement from chromatin and global chromatin decondensation, thereby promoting pluripotency and stem cell maintenance. Promotes profound chromatin decondensation during the innate immune response to infection in neutrophils by mediating formation of H1R54ci. Required for the formation of neutrophil extracellular traps (NETs); NETs are mainly composed of DNA fibers and are released by neutrophils to bind pathogens during inflammation. Citrullination of histone H3 prevents their methylation by CARM1 and HRMT1L2/PRMT1 and represses transcription. Citrullinates EP300/P300 at 'Arg-2142', which favors its interaction with NCOA2/GRIP1. This chain is Protein-arginine deiminase type-4 (Padi4), found in Rattus norvegicus (Rat).